The following is a 436-amino-acid chain: Trigger factor (436 aa).

The region spanning 161-246 (GDQVNIDFVG…VNSVAAPQLP (86 aa)) is the PPIase FKBP-type domain.

Belongs to the FKBP-type PPIase family. Tig subfamily.

It is found in the cytoplasm. It carries out the reaction [protein]-peptidylproline (omega=180) = [protein]-peptidylproline (omega=0). Its function is as follows. Involved in protein export. Acts as a chaperone by maintaining the newly synthesized protein in an open conformation. Functions as a peptidyl-prolyl cis-trans isomerase. This is Trigger factor from Stutzerimonas stutzeri (strain A1501) (Pseudomonas stutzeri).